The chain runs to 580 residues: Acyl-coenzyme A synthetase ACSM3, mitochondrial (580 aa).

The N-terminal 21 residues, 1 to 21 (MVMLLRARCFQRLAIPDPMRV), are a transit peptide targeting the mitochondrion. An N6-succinyllysine mark is found at Lys-67 and Lys-100. Lys-151 carries the N6-acetyllysine modification. ATP-binding positions include 229–237 (TSGTTGPPK), 368–373 (EGYGQT), Asp-455, Arg-470, and Lys-566.

It belongs to the ATP-dependent AMP-binding enzyme family. Mg(2+) serves as cofactor. Mn(2+) is required as a cofactor. In terms of tissue distribution, detected in kidney (at protein level). Detected in kidney proximal tubules and in liver. Detected at low levels in testis, stomach, heart and lung.

The protein localises to the mitochondrion. The protein resides in the mitochondrion matrix. The enzyme catalyses a medium-chain fatty acid + ATP + CoA = a medium-chain fatty acyl-CoA + AMP + diphosphate. The catalysed reaction is propanoate + ATP + CoA = propanoyl-CoA + AMP + diphosphate. It catalyses the reaction butanoate + ATP + CoA = butanoyl-CoA + AMP + diphosphate. It carries out the reaction 2-methylpropanoate + ATP + CoA = 2-methylpropanoyl-CoA + AMP + diphosphate. The enzyme catalyses 2-methylbutanoate + ATP + CoA = 2-methylbutanoyl-CoA + AMP + diphosphate. The catalysed reaction is octanoate + ATP + CoA = octanoyl-CoA + AMP + diphosphate. Functionally, catalyzes the activation of fatty acids by CoA to produce an acyl-CoA, the first step in fatty acid metabolism. Capable of activating medium-chain fatty acids with a preference for isobutyrate among fatty acids with 2-6 carbon atoms. The sequence is that of Acyl-coenzyme A synthetase ACSM3, mitochondrial (Acsm3) from Mus musculus (Mouse).